The chain runs to 376 residues: Queuine tRNA-ribosyltransferase (376 aa).

Catalysis depends on Asp-90, which acts as the Proton acceptor. Residues 90–94 (DSGGF), Asp-144, Gln-193, and Gly-220 contribute to the substrate site. Positions 251-257 (GVGTPED) are RNA binding. The active-site Nucleophile is the Asp-270. Residues 275–279 (TRNAR) are RNA binding; important for wobble base 34 recognition. Residues Cys-308, Cys-310, Cys-313, and His-339 each coordinate Zn(2+).

This sequence belongs to the queuine tRNA-ribosyltransferase family. In terms of assembly, homodimer. Within each dimer, one monomer is responsible for RNA recognition and catalysis, while the other monomer binds to the replacement base PreQ1. Requires Zn(2+) as cofactor.

It catalyses the reaction 7-aminomethyl-7-carbaguanine + guanosine(34) in tRNA = 7-aminomethyl-7-carbaguanosine(34) in tRNA + guanine. It functions in the pathway tRNA modification; tRNA-queuosine biosynthesis. In terms of biological role, catalyzes the base-exchange of a guanine (G) residue with the queuine precursor 7-aminomethyl-7-deazaguanine (PreQ1) at position 34 (anticodon wobble position) in tRNAs with GU(N) anticodons (tRNA-Asp, -Asn, -His and -Tyr). Catalysis occurs through a double-displacement mechanism. The nucleophile active site attacks the C1' of nucleotide 34 to detach the guanine base from the RNA, forming a covalent enzyme-RNA intermediate. The proton acceptor active site deprotonates the incoming PreQ1, allowing a nucleophilic attack on the C1' of the ribose to form the product. After dissociation, two additional enzymatic reactions on the tRNA convert PreQ1 to queuine (Q), resulting in the hypermodified nucleoside queuosine (7-(((4,5-cis-dihydroxy-2-cyclopenten-1-yl)amino)methyl)-7-deazaguanosine). The sequence is that of Queuine tRNA-ribosyltransferase from Cupriavidus metallidurans (strain ATCC 43123 / DSM 2839 / NBRC 102507 / CH34) (Ralstonia metallidurans).